Consider the following 122-residue polypeptide: Ribonuclease P protein component (122 aa).

Belongs to the RnpA family. As to quaternary structure, consists of a catalytic RNA component (M1 or rnpB) and a protein subunit.

It carries out the reaction Endonucleolytic cleavage of RNA, removing 5'-extranucleotides from tRNA precursor.. RNaseP catalyzes the removal of the 5'-leader sequence from pre-tRNA to produce the mature 5'-terminus. It can also cleave other RNA substrates such as 4.5S RNA. The protein component plays an auxiliary but essential role in vivo by binding to the 5'-leader sequence and broadening the substrate specificity of the ribozyme. This is Ribonuclease P protein component from Roseiflexus sp. (strain RS-1).